The sequence spans 62 residues: LNCHNQMSAQPPTTTRCSRWETNCYKKRWRDHRGYKTERGCGCPTVKKGIQLHCCTSDNCNN.

Disulfide bonds link Cys-3–Cys-24, Cys-17–Cys-41, Cys-43–Cys-54, and Cys-55–Cys-60.

Belongs to the three-finger toxin family. Short-chain subfamily. Type I alpha-neurotoxin sub-subfamily. In terms of tissue distribution, expressed by the venom gland.

It is found in the secreted. In terms of biological role, binds to muscle nicotinic acetylcholine receptor (nAChR) and inhibit acetylcholine from binding to the receptor, thereby impairing neuromuscular transmission. The chain is Short neurotoxin 3 from Naja mossambica (Mozambique spitting cobra).